A 365-amino-acid chain; its full sequence is Chorismate synthase (365 aa).

Arginine 48 and arginine 54 together coordinate NADP(+). FMN-binding positions include 125–127 (RSS), 238–239 (NA), glycine 278, 293–297 (KPTSS), and arginine 319.

Belongs to the chorismate synthase family. In terms of assembly, homotetramer. The cofactor is FMNH2.

It catalyses the reaction 5-O-(1-carboxyvinyl)-3-phosphoshikimate = chorismate + phosphate. Its pathway is metabolic intermediate biosynthesis; chorismate biosynthesis; chorismate from D-erythrose 4-phosphate and phosphoenolpyruvate: step 7/7. Functionally, catalyzes the anti-1,4-elimination of the C-3 phosphate and the C-6 proR hydrogen from 5-enolpyruvylshikimate-3-phosphate (EPSP) to yield chorismate, which is the branch point compound that serves as the starting substrate for the three terminal pathways of aromatic amino acid biosynthesis. This reaction introduces a second double bond into the aromatic ring system. The polypeptide is Chorismate synthase (Vesicomyosocius okutanii subsp. Calyptogena okutanii (strain HA)).